We begin with the raw amino-acid sequence, 365 residues long: tRNA-specific 2-thiouridylase MnmA (365 aa).

ATP-binding positions include 9–16 (AMSGGVDS) and Met-35. Cys-105 acts as the Nucleophile in catalysis. The cysteines at positions 105 and 203 are disulfide-linked. Residue Gly-129 coordinates ATP. The interaction with tRNA stretch occupies residues 153–155 (KDQ). Cys-203 acts as the Cysteine persulfide intermediate in catalysis. An interaction with tRNA region spans residues 308–309 (RY).

The protein belongs to the MnmA/TRMU family.

Its subcellular location is the cytoplasm. It carries out the reaction S-sulfanyl-L-cysteinyl-[protein] + uridine(34) in tRNA + AH2 + ATP = 2-thiouridine(34) in tRNA + L-cysteinyl-[protein] + A + AMP + diphosphate + H(+). In terms of biological role, catalyzes the 2-thiolation of uridine at the wobble position (U34) of tRNA, leading to the formation of s(2)U34. The chain is tRNA-specific 2-thiouridylase MnmA from Pelotomaculum thermopropionicum (strain DSM 13744 / JCM 10971 / SI).